The following is a 138-amino-acid chain: Putative pre-16S rRNA nuclease (138 aa).

This sequence belongs to the YqgF nuclease family.

The protein resides in the cytoplasm. Functionally, could be a nuclease involved in processing of the 5'-end of pre-16S rRNA. In Caldicellulosiruptor saccharolyticus (strain ATCC 43494 / DSM 8903 / Tp8T 6331), this protein is Putative pre-16S rRNA nuclease.